Consider the following 29-residue polypeptide: Cyclotide mden-C (29 aa).

The cyclopeptide (Gly-Asn) cross-link spans 1–29 (GKPICGETCFKGKCYTPGCTCSYPVCKKN). Intrachain disulfides connect cysteine 5-cysteine 19, cysteine 9-cysteine 21, and cysteine 14-cysteine 26.

The protein belongs to the cyclotide family. Post-translationally, this is a cyclic peptide.

Functionally, probably participates in a plant defense mechanism. This is Cyclotide mden-C from Melicytus dentatus (Tree violet).